An 86-amino-acid polypeptide reads, in one-letter code: Alpha-mammal toxin Ts3 (86 aa).

The signal sequence occupies residues 1 to 19 (MNYFILLVVVCLLTAGTEG). An LCN-type CS-alpha/beta domain is found at 21–82 (KDGYPVEYDN…EPTKTNGKCK (62 aa)). Cystine bridges form between Cys-31-Cys-81, Cys-35-Cys-57, Cys-43-Cys-64, and Cys-47-Cys-66. Residue Ser-83 is modified to Serine amide.

As to expression, expressed by the venom gland.

It localises to the secreted. In terms of biological role, alpha toxins bind voltage-independently at site-3 of sodium channels (Nav) and inhibit the inactivation of the activated channels, thereby blocking neuronal transmission. This synthetic toxin inhibits inactivation of rat Nav1.4/SCN4A (when tested at 201 nM). In addition, it has been shown to cause a persistent sodium channel activation in nitrergic inhibitory fibers innervating the rabbit corpus cavernosum, resulting in NO release and cavernosal smooth muscle relaxation. This toxin is active against mammals. Its function is as follows. this synthetic peptide with a Ser at position 31 (C12S) acts as a bradykinin-potentiating peptide (BPP). Induces endothelium-dependent vasodilation that is reverted by NO synthase inhibitor, suggesting it activates molecular targets on vascular endothelium leading to NO production and vasodilation. It appears to induce vasodilation through muscarinic acetylcholine receptors (AChR) M2 (CHRM2) and M3 (CHRM3). Does not inhibit the angiotensin-converting enzyme (ACE). Does not act via bradykinin B2 receptor. This Tityus serrulatus (Brazilian scorpion) protein is Alpha-mammal toxin Ts3.